Consider the following 172-residue polypeptide: Nicotinamide-nucleotide adenylyltransferase (172 aa).

The protein belongs to the archaeal NMN adenylyltransferase family.

It localises to the cytoplasm. The catalysed reaction is beta-nicotinamide D-ribonucleotide + ATP + H(+) = diphosphate + NAD(+). It participates in cofactor biosynthesis; NAD(+) biosynthesis; NAD(+) from nicotinamide D-ribonucleotide: step 1/1. This Aeropyrum pernix (strain ATCC 700893 / DSM 11879 / JCM 9820 / NBRC 100138 / K1) protein is Nicotinamide-nucleotide adenylyltransferase.